The chain runs to 347 residues: Probable zinc transporter 8 (347 aa).

The signal sequence occupies residues 1-27; that stretch reads MATTTQHMNQIFLVLLLISFAISPAIS. The Extracellular segment spans residues 28 to 51; it reads TVPKECETDSTDSCIDKTKALPLK. A helical transmembrane segment spans residues 52–72; it reads IVAIVAILVTSMIGVAAPLFS. The Cytoplasmic portion of the chain corresponds to 73–83; the sequence is RYVTFLHPDGK. Residues 84–104 form a helical membrane-spanning segment; that stretch reads IFMIIKCFASGIILGTGFMHV. At 105–124 the chain is on the extracellular side; the sequence is LPDSFEMLSSPCLEDNPWHK. The chain crosses the membrane as a helical span at residues 125-145; sequence FPFTGFVAMLSGLVTLAIDSI. The Cytoplasmic portion of the chain corresponds to 146–192; that stretch reads ATSLYTKKAVADDSEERTTPMIIQIDHLPLTTKERSSTCSKQLLRYR. A helical transmembrane segment spans residues 193-213; the sequence is VIATVLELGIIVHSVVIGLSL. At 214–224 the chain is on the extracellular side; the sequence is GATNDTCTIKG. Residues 225-245 form a helical membrane-spanning segment; the sequence is LIAALCFHQMFEGMGLGGCIL. The Cytoplasmic segment spans residues 246–254; it reads QAEYTNVKK. A helical transmembrane segment spans residues 255–275; that stretch reads FVMAFFFAVTTPSGIALGIAL. Over 276 to 286 the chain is Extracellular; sequence SSVYKDNSPTA. Residues 287-307 traverse the membrane as a helical segment; the sequence is LITVGLLNACSAGLLIYMALV. Residues 308-326 lie on the Cytoplasmic side of the membrane; sequence DLLAAEFMGSMLQRSVKLQ. Residues 327-347 traverse the membrane as a helical segment; that stretch reads LNCFGAALLGCGGMSVLAKWA.

This sequence belongs to the ZIP transporter (TC 2.A.5) family.

The protein resides in the cell membrane. Functionally, probably mediates zinc uptake from the rhizosphere. This is Probable zinc transporter 8 (ZIP8) from Arabidopsis thaliana (Mouse-ear cress).